We begin with the raw amino-acid sequence, 284 residues long: SF-assemblin (284 aa).

Positions 1–30 are disordered; the sequence is PTPSPEARVASRPFLDSPLPGSPRSGSPTG. A nonhelical region region spans residues 1 to 38; that stretch reads PTPSPEARVASRPFLDSPLPGSPRSGSPTGYITATKAI. Residues 17–30 are compositionally biased toward low complexity; sequence SPLPGSPRSGSPTG. Residues 39-284 are rod; sequence SAGKLEHVAE…QDGLRIVNNS (246 aa). Coiled coils occupy residues 56–102 and 239–268; these read EIEL…QIQV and LDEI…QAVN.

This sequence belongs to the SF-assemblin family. Post-translationally, consists of at least four isoforms including two phosphorylated.

It localises to the cytoplasm. It is found in the cytoskeleton. In terms of biological role, major component of the striated microtubule-associated fibers (SMAFs; system-I-fibers). The sequence is that of SF-assemblin from Spermatozopsis similis (Green alga).